The chain runs to 594 residues: P-granule-associated novel protein 1 (594 aa).

Positions 1–18 (MRSLLSFVLLALARIAIS) are cleaved as a signal peptide. The Extracellular portion of the chain corresponds to 19-513 (EETKSCIDIE…PEEEEVYRSG (495 aa)). 15 LRR repeats span residues 78–101 (GTEL…LFEN), 103–124 (FAKQ…SFQS), 125–149 (LGGS…LFTG), 150–173 (LKSL…AFEE), 175–197 (KKVE…TFDG), 198–221 (MKNL…AFRG), 222–245 (LNSL…IFSA), 246–269 (LKNL…SFPK), 271–290 (EKLV…KLKD), 291–315 (LPSL…MFGL), 318–341 (SDRI…AFQH), 343–365 (PNLI…SPSQ), 374–397 (LKKL…ELPK), 399–419 (LSSL…ALEG), and 420–442 (MEIK…TFDS). A helical membrane pass occupies residues 514 to 534 (WITVAATILTIVTIVIMVIIA). Topologically, residues 535 to 594 (MLYFKDARYQFPLRGRRSDSDLHKLIENDPLNIASDSILVVPAMPKRNTGPKKTVRFQNF) are cytoplasmic.

Interacts with glh-1. Interacts (via LRR regions) with myrf-1 (via C-terminus); the interaction promotes the role of myrf-1 in the synaptic remodeling of DD GABAergic motor neurons at the cell membrane. Expressed in the germline and somatic cells. As to expression, expressed in the germline and somatic cells. Expressed at higher levels in germline cells relative to somatic cells. In terms of tissue distribution, expressed in germline cells. Highly expressed in the pharynx and at lower levels in the intestine, but not detected in other tissues. Other studies suggest a broader expression pattern in somatic tissues: from embryogenesis to adult stages, expressed strongly in body wall muscle, vulva, somatic gonad and pharynx, at lower levels in the nerve ring, hypodermis, and rectal epithelia, and very weakly in the intestine.

The protein localises to the cytoplasm. It localises to the apical cell membrane. Its function is as follows. Regulates diverse developmental processes including larval molting and gonad maturation. In terms of biological role, promotes the localization of myrf-1 and myrf-2 to the cell membrane. In association with myrf-1, promotes the synaptic remodeling of DD GABAergic motor neurons whereby new synapses form in the dorsal processes of DD neurons. The sequence is that of P-granule-associated novel protein 1 from Caenorhabditis elegans.